Consider the following 425-residue polypeptide: UPF0597 protein VFMJ11_0655 (425 aa).

The protein belongs to the UPF0597 family.

This Aliivibrio fischeri (strain MJ11) (Vibrio fischeri) protein is UPF0597 protein VFMJ11_0655.